The primary structure comprises 134 residues: D-ribose pyranase (134 aa).

The active-site Proton donor is the His20. Residues Asp28, His99, and 123-125 (FSN) contribute to the substrate site.

It belongs to the RbsD / FucU family. RbsD subfamily. In terms of assembly, homodecamer.

It localises to the cytoplasm. It carries out the reaction beta-D-ribopyranose = beta-D-ribofuranose. It participates in carbohydrate metabolism; D-ribose degradation; D-ribose 5-phosphate from beta-D-ribopyranose: step 1/2. Functionally, catalyzes the interconversion of beta-pyran and beta-furan forms of D-ribose. The chain is D-ribose pyranase from Staphylococcus epidermidis (strain ATCC 12228 / FDA PCI 1200).